A 473-amino-acid chain; its full sequence is Serine/threonine-protein phosphatase 2A activator 1 (473 aa).

The tract at residues 360 to 473 (NAVPPPTSAH…HVPTKAPWAK (114 aa)) is disordered. Polar residues predominate over residues 368–378 (AHMSTTQSQSR). Over residues 395–416 (APWATATQAAPPAGAGTAAPWA) the composition is skewed to low complexity.

The protein belongs to the PTPA-type PPIase family.

The protein localises to the cytoplasm. It localises to the nucleus. It catalyses the reaction [protein]-peptidylproline (omega=180) = [protein]-peptidylproline (omega=0). Functionally, PPIases accelerate the folding of proteins. It catalyzes the cis-trans isomerization of proline imidic peptide bonds in oligopeptides. Acts as a regulatory subunit for PP2A-like phosphatases modulating their activity or substrate specificity, probably by inducing a conformational change in the catalytic subunit, a direct target of the PPIase. Can reactivate inactive phosphatase PP2A-phosphatase methylesterase complexes (PP2Ai) in presence of ATP and Mg(2+) by dissociating the inactive form from the complex. The chain is Serine/threonine-protein phosphatase 2A activator 1 (rrd1) from Aspergillus fumigatus (strain ATCC MYA-4609 / CBS 101355 / FGSC A1100 / Af293) (Neosartorya fumigata).